Reading from the N-terminus, the 317-residue chain is Acetyl-coenzyme A carboxylase carboxyl transferase subunit alpha (317 aa).

The region spanning 40–293 is the CoA carboxyltransferase C-terminal domain; sequence LEKRSADALK…GDIIAASLRS (254 aa).

It belongs to the AccA family. As to quaternary structure, acetyl-CoA carboxylase is a heterohexamer composed of biotin carboxyl carrier protein (AccB), biotin carboxylase (AccC) and two subunits each of ACCase subunit alpha (AccA) and ACCase subunit beta (AccD).

The protein resides in the cytoplasm. It carries out the reaction N(6)-carboxybiotinyl-L-lysyl-[protein] + acetyl-CoA = N(6)-biotinyl-L-lysyl-[protein] + malonyl-CoA. It participates in lipid metabolism; malonyl-CoA biosynthesis; malonyl-CoA from acetyl-CoA: step 1/1. Component of the acetyl coenzyme A carboxylase (ACC) complex. First, biotin carboxylase catalyzes the carboxylation of biotin on its carrier protein (BCCP) and then the CO(2) group is transferred by the carboxyltransferase to acetyl-CoA to form malonyl-CoA. This Brucella melitensis biotype 2 (strain ATCC 23457) protein is Acetyl-coenzyme A carboxylase carboxyl transferase subunit alpha.